Consider the following 295-residue polypeptide: Proline iminopeptidase (295 aa).

An AB hydrolase-1 domain is found at 35-279 (TLHGGPGMSH…ACSHLTMWED (245 aa)). The Nucleophile role is filled by S107. D246 is an active-site residue. Residue H273 is the Proton donor of the active site.

The protein belongs to the peptidase S33 family. In terms of assembly, part of the tricorn proteolytic complex.

The catalysed reaction is Release of N-terminal proline from a peptide.. Functionally, cleaves H-Pro-AMC as well as a wide spectrum of amino acid substrates and several peptide substrates without a proline at the N-terminus. In conjunction with the three factors F1, F2 and F3, Tricorn degrades oligopeptides in a sequential manner, yielding free amino acids. In Thermoplasma volcanium (strain ATCC 51530 / DSM 4299 / JCM 9571 / NBRC 15438 / GSS1), this protein is Proline iminopeptidase (pip).